Here is a 506-residue protein sequence, read N- to C-terminus: Glutamate--tRNA ligase (506 aa).

Residues 12 to 22 (PSPTGDPHVGT) carry the 'HIGH' region motif. The 'KMSKS' region signature appears at 253-257 (KLSKR). Lys-256 provides a ligand contact to ATP.

Belongs to the class-I aminoacyl-tRNA synthetase family. Glutamate--tRNA ligase type 1 subfamily. As to quaternary structure, monomer.

Its subcellular location is the cytoplasm. It catalyses the reaction tRNA(Glu) + L-glutamate + ATP = L-glutamyl-tRNA(Glu) + AMP + diphosphate. Its function is as follows. Catalyzes the attachment of glutamate to tRNA(Glu) in a two-step reaction: glutamate is first activated by ATP to form Glu-AMP and then transferred to the acceptor end of tRNA(Glu). This chain is Glutamate--tRNA ligase, found in Chlamydia trachomatis serovar L2 (strain ATCC VR-902B / DSM 19102 / 434/Bu).